A 696-amino-acid polypeptide reads, in one-letter code: MLLWILLLETSLCFAAGNVTGDVCKEKICSCNEIEGDLHVDCEKKGFTSLQRFTAPTSQFYHLFLHGNSLTRLFPNEFANFYNAVSLHMENNGLHEIVPGAFLGLQLVKRLHINNNKIKSFRKQTFLGLDDLEYLQADFNLLRDIDPGAFQDLNKLEVLILNDNLISTLPANVFQYVPITHLDLRGNRLKTLPYEEVLEQIPGIAEILLEDNPWDCTCDLLSLKEWLENIPKNALIGRVVCEAPTRLQGKDLNETTEQDLCPLKNRVDSSLPAPPAQEETFAPGPLPTPFKTNGQEDHATPGSAPNGGTKIPGNWQIKIRPTAAIATGSSRNKPLANSLPCPGGCSCDHIPGSGLKMNCNNRNVSSLADLKPKLSNVQELFLRDNKIHSIRKSHFVDYKNLILLDLGNNNIATVENNTFKNLLDLRWLYMDSNYLDTLSREKFAGLQNLEYLNVEYNAIQLILPGTFNAMPKLRILILNNNLLRSLPVDVFAGVSLSKLSLHNNYFMYLPVAGVLDQLTSIIQIDLHGNPWECSCTIVPFKQWAERLGSEVLMSDLKCETPVNFFRKDFMLLSNDEICPQLYARISPTLTSHSKNSTGLAETGTHSNSYLDTSRVSISVLVPGLLLVFVTSAFTVVGMLVFILRNRKRSKRRDANSSASEINSLQTVCDSSYWHNGPYNADGAHRVYDCGSHSLSD.

An N-terminal signal peptide occupies residues 1 to 17; sequence MLLWILLLETSLCFAAG. In terms of domain architecture, LRRNT 1 spans 18–57; that stretch reads NVTGDVCKEKICSCNEIEGDLHVDCEKKGFTSLQRFTAPT. Over 18 to 622 the chain is Extracellular; the sequence is NVTGDVCKEK…SRVSISVLVP (605 aa). 6 LRR repeats span residues 59 to 80, 83 to 104, 106 to 128, 131 to 152, 155 to 176, and 178 to 199; these read QFYHLFLHGNSLTRLFPNEFAN, NAVSLHMENNGLHEIVPGAFLG, QLVKRLHINNNKIKSFRKQTFLG, DLEYLQADFNLLRDIDPGAFQD, KLEVLILNDNLISTLPANVFQY, and PITHLDLRGNRLKTLPYEEVLE. The 52-residue stretch at 212–263 folds into the LRRCT 1 domain; it reads NPWDCTCDLLSLKEWLENIPKNALIGRVVCEAPTRLQGKDLNETTEQDLCPL. A disordered region spans residues 265 to 314; the sequence is NRVDSSLPAPPAQEETFAPGPLPTPFKTNGQEDHATPGSAPNGGTKIPGN. An LRRNT 2 domain is found at 332–373; sequence NKPLANSLPCPGGCSCDHIPGSGLKMNCNNRNVSSLADLKPK. LRR repeat units follow at residues 376-397, 400-421, 424-445, 448-469, 472-493, and 495-516; these read NVQELFLRDNKIHSIRKSHFVD, NLILLDLGNNNIATVENNTFKN, DLRWLYMDSNYLDTLSREKFAG, NLEYLNVEYNAIQLILPGTFNA, KLRILILNNNLLRSLPVDVFAG, and SLSKLSLHNNYFMYLPVAGVLD. An LRRCT 2 domain is found at 529 to 580; that stretch reads NPWECSCTIVPFKQWAERLGSEVLMSDLKCETPVNFFRKDFMLLSNDEICPQ. Residues 623–643 form a helical membrane-spanning segment; that stretch reads GLLLVFVTSAFTVVGMLVFIL. The Cytoplasmic portion of the chain corresponds to 644–696; the sequence is RNRKRSKRRDANSSASEINSLQTVCDSSYWHNGPYNADGAHRVYDCGSHSLSD. Position 695 is a phosphoserine; by CK2 (Ser-695).

The protein belongs to the SLITRK family. As to quaternary structure, can form homodimers; homodimerization requires repeat LRR 2. Interacts with YWHAB, YWHAE, YWHAG, YWHAH, SFN, YWHAQ and YWHAZ. Undergoes proteolytic cleavage that results in shedding of the ectodomain and cleavage of the C-terminal cytoplasmic tail. Glycosylated. Phosphorylation at Ser-695 is necessary for proper function in promoting neurite outgrowth. In terms of tissue distribution, expressed predominantly in the frontal lobe of the cerebral cortex of the brain. Also expressed in some astrocytic brain tumors such as astrocytomas, oligodendrogliomas, glioblastomas, gangliogliomas and primitive neuroectodermal tumors.

The protein resides in the membrane. It localises to the secreted. Its subcellular location is the synapse. It is involved in synaptogenesis and promotes excitatory synapse differentiation. Enhances neuronal dendrite outgrowth. This chain is SLIT and NTRK-like protein 1 (SLITRK1), found in Homo sapiens (Human).